The chain runs to 372 residues: Cytochrome b (372 aa).

Helical transmembrane passes span 25-45 (FGSM…FLAI), 69-90 (WIMQ…YIHI), 105-125 (WVSG…GYVL), and 170-190 (FFAL…IHVM). 2 residues coordinate heme b: His-75 and His-89. 2 residues coordinate heme b: His-174 and His-188. His-193 contributes to the a ubiquinone binding site. 4 helical membrane-spanning segments follow: residues 218–238 (YKDT…TSFF), 280–300 (LGGT…PFTH), 312–332 (MAQV…WAAT), and 339–358 (FTTI…IINP).

This sequence belongs to the cytochrome b family. The cytochrome bc1 complex contains 3 respiratory subunits (MT-CYB, CYC1 and UQCRFS1), 2 core proteins (UQCRC1 and UQCRC2) and probably 6 low-molecular weight proteins. It depends on heme b as a cofactor.

The protein localises to the mitochondrion inner membrane. Component of the ubiquinol-cytochrome c reductase complex (complex III or cytochrome b-c1 complex) that is part of the mitochondrial respiratory chain. The b-c1 complex mediates electron transfer from ubiquinol to cytochrome c. Contributes to the generation of a proton gradient across the mitochondrial membrane that is then used for ATP synthesis. This chain is Cytochrome b (MT-CYB), found in Heterodon simus (Southern hognose snake).